A 535-amino-acid polypeptide reads, in one-letter code: 2-isopropylmalate synthase (535 aa).

The region spanning 13–274 (VLIFDTTLRD…YFNPFLGRPP (262 aa)) is the Pyruvate carboxyltransferase domain. D22, H213, H215, and N249 together coordinate Mn(2+). The segment at 414-535 (QLEFVQVSCG…LEQRALHPQA (122 aa)) is regulatory domain.

This sequence belongs to the alpha-IPM synthase/homocitrate synthase family. LeuA type 1 subfamily. As to quaternary structure, homodimer. Mn(2+) is required as a cofactor.

Its subcellular location is the cytoplasm. It carries out the reaction 3-methyl-2-oxobutanoate + acetyl-CoA + H2O = (2S)-2-isopropylmalate + CoA + H(+). It participates in amino-acid biosynthesis; L-leucine biosynthesis; L-leucine from 3-methyl-2-oxobutanoate: step 1/4. Functionally, catalyzes the condensation of the acetyl group of acetyl-CoA with 3-methyl-2-oxobutanoate (2-ketoisovalerate) to form 3-carboxy-3-hydroxy-4-methylpentanoate (2-isopropylmalate). This Thermosynechococcus vestitus (strain NIES-2133 / IAM M-273 / BP-1) protein is 2-isopropylmalate synthase.